The chain runs to 215 residues: Adenylate kinase (215 aa).

An ATP-binding site is contributed by 10 to 15; sequence GAGKGT. The segment at 30 to 59 is NMP; that stretch reads STGDILRANVREGTELGLAAKAYMDKGELV. AMP-binding positions include Thr-31, Arg-36, 57-59, 85-88, and Gln-92; these read ELV and GYPR. Positions 126-162 are LID; sequence GRLMCKCGASYHTIANPPKKDNICDICGGEVYQRDDD. ATP is bound at residue Arg-127. 2 residues coordinate Zn(2+): Cys-130 and Cys-132. 135–136 serves as a coordination point for ATP; sequence SY. Zn(2+) is bound by residues Cys-149 and Cys-152. Arg-159 and Arg-170 together coordinate AMP. An ATP-binding site is contributed by Lys-198.

It belongs to the adenylate kinase family. As to quaternary structure, monomer.

The protein localises to the cytoplasm. The catalysed reaction is AMP + ATP = 2 ADP. The protein operates within purine metabolism; AMP biosynthesis via salvage pathway; AMP from ADP: step 1/1. Its function is as follows. Catalyzes the reversible transfer of the terminal phosphate group between ATP and AMP. Plays an important role in cellular energy homeostasis and in adenine nucleotide metabolism. This chain is Adenylate kinase, found in Methanosarcina mazei (strain ATCC BAA-159 / DSM 3647 / Goe1 / Go1 / JCM 11833 / OCM 88) (Methanosarcina frisia).